Reading from the N-terminus, the 263-residue chain is Phosphatidylglycerol--prolipoprotein diacylglyceryl transferase (263 aa).

Helical transmembrane passes span 16–36 (LAVS…WFYA), 55–75 (FVTY…ILLY), 92–112 (EGGM…YIFC), and 117–137 (LNFL…LFFG). R138 contacts a 1,2-diacyl-sn-glycero-3-phospho-(1'-sn-glycerol). A run of 3 helical transmembrane segments spans residues 172–192 (QLYE…YAVF), 201–221 (GLNS…IEIF), and 234–254 (SLTM…YLII).

It belongs to the Lgt family.

It localises to the cell inner membrane. The catalysed reaction is L-cysteinyl-[prolipoprotein] + a 1,2-diacyl-sn-glycero-3-phospho-(1'-sn-glycerol) = an S-1,2-diacyl-sn-glyceryl-L-cysteinyl-[prolipoprotein] + sn-glycerol 1-phosphate + H(+). The protein operates within protein modification; lipoprotein biosynthesis (diacylglyceryl transfer). Its function is as follows. Catalyzes the transfer of the diacylglyceryl group from phosphatidylglycerol to the sulfhydryl group of the N-terminal cysteine of a prolipoprotein, the first step in the formation of mature lipoproteins. The chain is Phosphatidylglycerol--prolipoprotein diacylglyceryl transferase from Rickettsia bellii (strain OSU 85-389).